The following is a 103-amino-acid chain: Large ribosomal subunit protein bL21 (103 aa).

It belongs to the bacterial ribosomal protein bL21 family. In terms of assembly, part of the 50S ribosomal subunit. Contacts protein L20.

Functionally, this protein binds to 23S rRNA in the presence of protein L20. In Desulfotalea psychrophila (strain LSv54 / DSM 12343), this protein is Large ribosomal subunit protein bL21.